Reading from the N-terminus, the 428-residue chain is 5-methylthioadenosine/S-adenosylhomocysteine deaminase (428 aa).

Residues His65 and His67 each contribute to the Zn(2+) site. 3 residues coordinate substrate: Glu94, Arg158, and His184. His211 provides a ligand contact to Zn(2+). The substrate site is built by Glu214 and Asp299. Asp299 contacts Zn(2+).

It belongs to the metallo-dependent hydrolases superfamily. MTA/SAH deaminase family. Zn(2+) is required as a cofactor.

It carries out the reaction S-adenosyl-L-homocysteine + H2O + H(+) = S-inosyl-L-homocysteine + NH4(+). The catalysed reaction is S-methyl-5'-thioadenosine + H2O + H(+) = S-methyl-5'-thioinosine + NH4(+). Its function is as follows. Catalyzes the deamination of 5-methylthioadenosine and S-adenosyl-L-homocysteine into 5-methylthioinosine and S-inosyl-L-homocysteine, respectively. Is also able to deaminate adenosine. The sequence is that of 5-methylthioadenosine/S-adenosylhomocysteine deaminase from Moorella thermoacetica (strain ATCC 39073 / JCM 9320).